The primary structure comprises 227 residues: ATP synthase subunit a (227 aa).

Helical transmembrane passes span 16-36 (AFVYAFHFCLVALIILIVAYI), 79-99 (LVATIGFIVFFSNVIGIIPGF), 105-125 (SLNLTLVLALVVFIYYNFEGI), 176-196 (LFLLAMLTLAPWFAPLPAFAL), and 202-222 (VLQTFIFMMLTYVYLAGAVAI).

This sequence belongs to the ATPase A chain family. F-type ATPases have 2 components, CF(1) - the catalytic core - and CF(0) - the membrane proton channel. CF(1) has five subunits: alpha(3), beta(3), gamma(1), delta(1), epsilon(1). CF(0) has three main subunits: a(1), b(2) and c(9-12). The alpha and beta chains form an alternating ring which encloses part of the gamma chain. CF(1) is attached to CF(0) by a central stalk formed by the gamma and epsilon chains, while a peripheral stalk is formed by the delta and b chains.

It is found in the cell inner membrane. Key component of the proton channel; it plays a direct role in the translocation of protons across the membrane. This chain is ATP synthase subunit a, found in Campylobacter concisus (strain 13826).